The sequence spans 661 residues: CD180 antigen (661 aa).

Positions 1-23 (MAFDVSCFFWVVLFSAGCKVITS) are cleaved as a signal peptide. Topologically, residues 24–626 (WDQMCIEKEA…KLSDVKLSCG (603 aa)) are extracellular. In terms of domain architecture, LRRNT spans 33 to 53 (ANKTYNCENLGLSEIPDTLPN). 4 N-linked (GlcNAc...) asparagine glycosylation sites follow: Asn34, Asn53, Asn70, and Asn78. LRR repeat units follow at residues 54–75 (TTEF…TFSR), 78–99 (NLTF…TFQS), 102–123 (QLST…SLNG), 126–147 (SLKH…PVHN), 150–171 (NLES…KDFP), 174–195 (NLKV…DMRS), and 201–221 (NLSL…AFDS). 3 N-linked (GlcNAc...) asparagine glycosylation sites follow: Asn201, Asn234, and Asn244. LRR repeat units follow at residues 275-296 (SVES…TFQC), 299-320 (QLQE…MKGL), 322-343 (LLKK…SAAN), 346-366 (SLTH…VGCL), and 371-391 (NLQT…CSLQ). N-linked (GlcNAc...) asparagine glycosylation is found at Asn394 and Asn402. 7 LRR repeats span residues 397 to 418 (HLQT…AFKE), 421 to 442 (QLEL…SPFQ), 446 to 466 (FLQV…HLLA), 470 to 493 (VLRH…NLLQ), 497 to 518 (SLEV…AFHS), 521 to 544 (KMSH…SHLK), and 546 to 564 (IYLN…RLLP). N-linked (GlcNAc...) asparagine glycosylation occurs at Asn451. Asn573 carries N-linked (GlcNAc...) asparagine glycosylation. The LRRCT domain maps to 577–627 (NPLDCTCSNIHFLTWYKENLHKLEGSEETTCANPPSLRGVKLSDVKLSCGI). The helical transmembrane segment at 627 to 650 (ITAIGIFFLIVFLLLLAILLFFAV) threads the bilayer. At 651 to 661 (KYLLRWKYQHI) the chain is on the cytoplasmic side.

This sequence belongs to the Toll-like receptor family. M-shaped tetramer of two CD180-LY86 heterodimers. As to expression, expressed mainly on mature peripherical B cells. Detected in spleen, lymph node and appendix. Not detected in pre-B and -T cells.

The protein localises to the cell membrane. Functionally, may cooperate with MD-1 and TLR4 to mediate the innate immune response to bacterial lipopolysaccharide (LPS) in B-cells. Leads to NF-kappa-B activation. Also involved in the life/death decision of B-cells. The protein is CD180 antigen (CD180) of Homo sapiens (Human).